The primary structure comprises 388 residues: MVSIMNKNELITEILKNEVVKALGCTEVGLIGYTVAKAKPEDLYSIKEIKLILDKGTFKNAFSVGVPNTNKFGILPAVVGGLLGREENKLEVFKDIKYDEKLEEFIENKLKIEVIDSDVYCKVIIKANKVYEAETKGSHSGKSLSDDLKNAYKSLTLKDFIDYIEDIPEEVIKIIKETIETNKNLSTPEVPEDFISLDLKDEILNHMLKKTVSAVYNRMIGINKPAMAIAGSGNMGLTATLPIIAYDEIKGHDEEKLTKSITLSALTTIYSAYHSSYISAMCGCVNRGGIGAVSGLSYYIFGFDRIEESIKSFTANLPGIVCDGGKIGCALKIASGVFAIYLSLFSKVPYTNGIVGKDFKECIENIGKIGKAMKPVDDEIIEILKNKK.

The active-site Proton acceptor is the C25. [4Fe-4S] cluster is bound by residues C282, C322, and C329.

Belongs to the L-cysteine desulfidase family. In terms of assembly, homotrimer. The cofactor is [4Fe-4S] cluster.

The enzyme catalyses L-cysteine + H2O = hydrogen sulfide + pyruvate + NH4(+) + H(+). Functionally, catalyzes the cleavage of L-cysteine to form 2-aminoprop-2-enoate and sulfide. The former then spontaneously hydrolyzes to pyruvate and NH(3). May be responsible for the production of sulfide required for the biosynthesis of iron-sulfur centers in this archaea. Is very specific for L-cysteine, with no activity being detected with D-cysteine, L-homocysteine, 3-mercaptopropionate (cysteine without the amino group), cysteamine (cysteine without the carboxylate), or mercaptolactate (the hydroxyl analog of cysteine). This is L-cysteine desulfidase from Methanocaldococcus jannaschii (strain ATCC 43067 / DSM 2661 / JAL-1 / JCM 10045 / NBRC 100440) (Methanococcus jannaschii).